A 749-amino-acid chain; its full sequence is Disintegrin and metalloproteinase domain-containing protein 10 (749 aa).

A signal peptide spans 1 to 18; that stretch reads MGLLRLVFLLSWAASAGG. Residues 19–213 constitute a propeptide that is removed on maturation; the sequence is LYGNPLNKYI…SGPVILRKKR (195 aa). Over 19-673 the chain is Extracellular; it reads LYGNPLNKYI…NPELYENIAE (655 aa). Positions 170-177 match the Cysteine switch motif; it reads GGCADSSV. Cys-172 contacts Zn(2+). In terms of domain architecture, Peptidase M12B spans 220–457; it reads NTCQLFIQTD…KENSCFVESG (238 aa). 17 disulfide bridges follow: Cys-222-Cys-314, Cys-345-Cys-452, Cys-400-Cys-436, Cys-461-Cys-496, Cys-472-Cys-485, Cys-474-Cys-480, Cys-484-Cys-516, Cys-504-Cys-512, Cys-511-Cys-537, Cys-525-Cys-544, Cys-531-Cys-563, Cys-556-Cys-568, Cys-573-Cys-599, Cys-581-Cys-608, Cys-583-Cys-598, Cys-595-Cys-640, and Cys-633-Cys-646. N-linked (GlcNAc...) asparagine glycans are attached at residues Asn-268 and Asn-279. His-384 contacts Zn(2+). Glu-385 is a catalytic residue. Positions 388 and 394 each coordinate Zn(2+). Asn-440 is a glycosylation site (N-linked (GlcNAc...) asparagine). The region spanning 458 to 552 is the Disintegrin domain; the sequence is QPICGNGLVE…QCPPSEPREN (95 aa). N-linked (GlcNAc...) asparagine glycosylation is present at Asn-552. The helical transmembrane segment at 674-694 threads the bilayer; that stretch reads WIVAHWWAVLLMGIALIMLMA. Residues 695–749 lie on the Cytoplasmic side of the membrane; sequence GFIKICSVHTPSSNPKLPPPKPLPGTLKRRRPPQTTQQPSRQRPRENYQMGHMRH. The segment at 705–749 is disordered; sequence PSSNPKLPPPKPLPGTLKRRRPPQTTQQPSRQRPRENYQMGHMRH. An SH3-binding motif is present at residues 709–716; that stretch reads PKLPPPKP. Thr-720 is modified (phosphothreonine). The SH3-binding signature appears at 723 to 729; the sequence is RRRPPQT.

Zn(2+) serves as cofactor. Post-translationally, the precursor is cleaved by furin and PCSK7.

The protein localises to the membrane. It catalyses the reaction Endopeptidase of broad specificity.. In terms of biological role, controls the proteolytic processing of Notch and mediates lateral inhibition during neurogenesis. The protein is Disintegrin and metalloproteinase domain-containing protein 10 (adam10) of Xenopus laevis (African clawed frog).